Consider the following 358-residue polypeptide: DnaJ homolog subfamily B member 11 (358 aa).

The N-terminal stretch at 1-22 (MAPQNLSTFCLLLLYLIGTVIA) is a signal peptide. The J domain occupies 25-90 (DFYKILGVPR…EKRKQYDTYG (66 aa)). A Phosphothreonine modification is found at Thr188. N-linked (GlcNAc...) asparagine glycosylation occurs at Asn261.

In terms of assembly, part of a large chaperone multiprotein complex comprising DNAJB11, HSP90B1, HSPA5, HYOU, PDIA2, PDIA4, PDIA6, PPIB, SDF2L1, UGGT1 and very small amounts of ERP29, but not, or at very low levels, CALR nor CANX. Binds to denatured substrates in an ATP-independent manner. Interacts via the J domain with HSPA5 in an ATP-dependent manner. Contains high-mannose Endo H-sensitive carbohydrates. Post-translationally, cys-169, Cys-171, Cys-193 and Cys-196 form intramolecular disulfide bonds. The preferential partner for each Cys is not known.

Its subcellular location is the endoplasmic reticulum lumen. Functionally, as a co-chaperone for HSPA5 it is required for proper folding, trafficking or degradation of proteins. Binds directly to both unfolded proteins that are substrates for ERAD and nascent unfolded peptide chains, but dissociates from the HSPA5-unfolded protein complex before folding is completed. May help recruiting HSPA5 and other chaperones to the substrate. Stimulates HSPA5 ATPase activity. It is necessary for maturation and correct trafficking of PKD1. The protein is DnaJ homolog subfamily B member 11 (Dnajb11) of Mus musculus (Mouse).